Consider the following 235-residue polypeptide: MKRAPNHPAELARRIGIASEDLATLEMALTHPSFVYENPQAPPEHNQRLEFLGDAVLGLVIGEQLFVRYPTWTEGELSRRRAAVVCEANLADGARRLQLGAWLKLGRGEEASGGREKPSILADALEAVIGAIFLSGGIEAARRFIVDLFGDALANAQNLVSGDNKTAFQEWVQRTGPADIRYCIVDESGPDHDKRFVAAVMVNGTVIADGQGRTKKEAEQQAAGRAMREWAGRKG.

The 130-residue stretch at 8–137 folds into the RNase III domain; sequence PAELARRIGI…VIGAIFLSGG (130 aa). Glu-50 serves as a coordination point for Mg(2+). Residue Asp-54 is part of the active site. The Mg(2+) site is built by Asp-123 and Glu-126. Glu-126 is a catalytic residue. A DRBM domain is found at 163–232; the sequence is DNKTAFQEWV…AGRAMREWAG (70 aa). Residues 211–235 are disordered; that stretch reads QGRTKKEAEQQAAGRAMREWAGRKG. Basic and acidic residues predominate over residues 226–235; sequence AMREWAGRKG.

This sequence belongs to the ribonuclease III family. Homodimer. The cofactor is Mg(2+).

It localises to the cytoplasm. It carries out the reaction Endonucleolytic cleavage to 5'-phosphomonoester.. In terms of biological role, digests double-stranded RNA. Involved in the processing of primary rRNA transcript to yield the immediate precursors to the large and small rRNAs (23S and 16S). Processes some mRNAs, and tRNAs when they are encoded in the rRNA operon. Processes pre-crRNA and tracrRNA of type II CRISPR loci if present in the organism. The protein is Ribonuclease 3 of Heliobacterium modesticaldum (strain ATCC 51547 / Ice1).